The sequence spans 428 residues: Histidine--tRNA ligase (428 aa).

It belongs to the class-II aminoacyl-tRNA synthetase family. As to quaternary structure, homodimer.

It localises to the cytoplasm. It carries out the reaction tRNA(His) + L-histidine + ATP = L-histidyl-tRNA(His) + AMP + diphosphate + H(+). The chain is Histidine--tRNA ligase from Bordetella bronchiseptica (strain ATCC BAA-588 / NCTC 13252 / RB50) (Alcaligenes bronchisepticus).